The primary structure comprises 382 residues: Carbamoyl phosphate synthase small chain (382 aa).

The interval 1-189 (MIKSALLVLE…GLPEAKKEDE (189 aa)) is CPSase. Serine 47, glycine 241, and glycine 243 together coordinate L-glutamine. One can recognise a Glutamine amidotransferase type-1 domain in the interval 193-380 (HVVAYDFGAK…IELIEQYRKT (188 aa)). Residue cysteine 269 is the Nucleophile of the active site. L-glutamine-binding residues include leucine 270, glutamine 273, asparagine 311, glycine 313, and phenylalanine 314. Catalysis depends on residues histidine 353 and glutamate 355.

This sequence belongs to the CarA family. As to quaternary structure, composed of two chains; the small (or glutamine) chain promotes the hydrolysis of glutamine to ammonia, which is used by the large (or ammonia) chain to synthesize carbamoyl phosphate. Tetramer of heterodimers (alpha,beta)4.

It carries out the reaction hydrogencarbonate + L-glutamine + 2 ATP + H2O = carbamoyl phosphate + L-glutamate + 2 ADP + phosphate + 2 H(+). The enzyme catalyses L-glutamine + H2O = L-glutamate + NH4(+). Its pathway is amino-acid biosynthesis; L-arginine biosynthesis; carbamoyl phosphate from bicarbonate: step 1/1. It participates in pyrimidine metabolism; UMP biosynthesis via de novo pathway; (S)-dihydroorotate from bicarbonate: step 1/3. Its function is as follows. Small subunit of the glutamine-dependent carbamoyl phosphate synthetase (CPSase). CPSase catalyzes the formation of carbamoyl phosphate from the ammonia moiety of glutamine, carbonate, and phosphate donated by ATP, constituting the first step of 2 biosynthetic pathways, one leading to arginine and/or urea and the other to pyrimidine nucleotides. The small subunit (glutamine amidotransferase) binds and cleaves glutamine to supply the large subunit with the substrate ammonia. The protein is Carbamoyl phosphate synthase small chain of Escherichia coli O157:H7.